A 148-amino-acid chain; its full sequence is Ubiquitin-conjugating enzyme E2 28 (148 aa).

The 147-residue stretch at 1–147 (MASKRILKEL…ARSWTQKYAM (147 aa)) folds into the UBC core domain. C85 functions as the Glycyl thioester intermediate in the catalytic mechanism.

This sequence belongs to the ubiquitin-conjugating enzyme family. Interacts with SINAT5. Expressed in seeds, pistils, siliques, hypocotyls and leaves.

It carries out the reaction S-ubiquitinyl-[E1 ubiquitin-activating enzyme]-L-cysteine + [E2 ubiquitin-conjugating enzyme]-L-cysteine = [E1 ubiquitin-activating enzyme]-L-cysteine + S-ubiquitinyl-[E2 ubiquitin-conjugating enzyme]-L-cysteine.. It participates in protein modification; protein ubiquitination. Functionally, accepts the ubiquitin from the E1 complex and catalyzes its covalent attachment to other proteins. This is Ubiquitin-conjugating enzyme E2 28 from Arabidopsis thaliana (Mouse-ear cress).